The sequence spans 285 residues: Elongation factor Ts (285 aa).

Residues 82–85 (TDFV) form an involved in Mg(2+) ion dislocation from EF-Tu region.

The protein belongs to the EF-Ts family.

Its subcellular location is the cytoplasm. Functionally, associates with the EF-Tu.GDP complex and induces the exchange of GDP to GTP. It remains bound to the aminoacyl-tRNA.EF-Tu.GTP complex up to the GTP hydrolysis stage on the ribosome. The chain is Elongation factor Ts from Sodalis glossinidius (strain morsitans).